The sequence spans 98 residues: NADH-ubiquinone oxidoreductase chain 4L (98 aa).

The next 3 membrane-spanning stretches (helical) occupy residues 1–21 (MPYI…GMLI), 29–49 (SLLC…LTIL), and 61–81 (IILL…LVMV).

Belongs to the complex I subunit 4L family. In terms of assembly, core subunit of respiratory chain NADH dehydrogenase (Complex I) which is composed of 45 different subunits.

Its subcellular location is the mitochondrion inner membrane. It catalyses the reaction a ubiquinone + NADH + 5 H(+)(in) = a ubiquinol + NAD(+) + 4 H(+)(out). Core subunit of the mitochondrial membrane respiratory chain NADH dehydrogenase (Complex I) which catalyzes electron transfer from NADH through the respiratory chain, using ubiquinone as an electron acceptor. Part of the enzyme membrane arm which is embedded in the lipid bilayer and involved in proton translocation. The chain is NADH-ubiquinone oxidoreductase chain 4L (MT-ND4L) from Cephalopachus bancanus (Western tarsier).